We begin with the raw amino-acid sequence, 484 residues long: MKLIVKVFPEITIKSPPVRKKFIRQLGKNIRTVLRELDADIVVGGVWDNLEVETRLTDPKVLQGIRERLSCMPGIANFLQVAEYPLGDLDDVVAKCELHYADLLPGKMFSVRCKRAGRHDFSSMDVEKYVGSKLRMQCGAAGIELKKPDLVVRMEIRDQRLFVVHDQHQGMGGYPLGALEQTLVLMSGGFDSTVAAYQIMRRGLMAHFCFFNLGGRAHELGVMEVAHFIWKKYGSSQRVLFVSVPFEEVLGEILQKVDNSHMGVVLKRMMLRAASAVADRLEIDVLVTGEAISQVASQTLPNLSLIDAATDKLVLRPLVATHKQDIVDLATEIGTADFARHMPEYCGVISVNPKTNAKRNRVEYEEKQFDMAILEQALERAKLVSIDRVIDDLSRNVDIEEVSQALAGQVILDIRHPDAQEDQPLQVPGVEIQTLPFYALNSRFKALDDTRQYLLYCDKGVMSRLHAHHLLSEGHANVRVYRPS.

One can recognise a THUMP domain in the interval 63 to 167 (QGIRERLSCM…DQRLFVVHDQ (105 aa)). ATP is bound by residues 185 to 186 (LM), lysine 267, glycine 289, and glutamine 298. Cysteine 346 and cysteine 457 form a disulfide bridge. Residues 405–483 (ALAGQVILDI…GHANVRVYRP (79 aa)) enclose the Rhodanese domain. Cysteine 457 acts as the Cysteine persulfide intermediate in catalysis.

Belongs to the ThiI family.

It is found in the cytoplasm. It carries out the reaction [ThiI sulfur-carrier protein]-S-sulfanyl-L-cysteine + a uridine in tRNA + 2 reduced [2Fe-2S]-[ferredoxin] + ATP + H(+) = [ThiI sulfur-carrier protein]-L-cysteine + a 4-thiouridine in tRNA + 2 oxidized [2Fe-2S]-[ferredoxin] + AMP + diphosphate. The enzyme catalyses [ThiS sulfur-carrier protein]-C-terminal Gly-Gly-AMP + S-sulfanyl-L-cysteinyl-[cysteine desulfurase] + AH2 = [ThiS sulfur-carrier protein]-C-terminal-Gly-aminoethanethioate + L-cysteinyl-[cysteine desulfurase] + A + AMP + 2 H(+). It functions in the pathway cofactor biosynthesis; thiamine diphosphate biosynthesis. Functionally, catalyzes the ATP-dependent transfer of a sulfur to tRNA to produce 4-thiouridine in position 8 of tRNAs, which functions as a near-UV photosensor. Also catalyzes the transfer of sulfur to the sulfur carrier protein ThiS, forming ThiS-thiocarboxylate. This is a step in the synthesis of thiazole, in the thiamine biosynthesis pathway. The sulfur is donated as persulfide by IscS. In Pseudomonas syringae pv. syringae (strain B728a), this protein is tRNA sulfurtransferase.